A 194-amino-acid chain; its full sequence is Probable GTP-binding protein EngB (194 aa).

One can recognise an EngB-type G domain in the interval 22–194; the sequence is DLPEYALAGR…AWQFIKEGME (173 aa). Residues 30–37, 57–61, 75–78, 142–145, and 174–176 contribute to the GTP site; these read GRSNVGKS, GKTQT, DVPG, TKAD, and FSS. Mg(2+) is bound by residues Ser-37 and Thr-59.

Belongs to the TRAFAC class TrmE-Era-EngA-EngB-Septin-like GTPase superfamily. EngB GTPase family. The cofactor is Mg(2+).

Functionally, necessary for normal cell division and for the maintenance of normal septation. The protein is Probable GTP-binding protein EngB of Listeria monocytogenes serotype 4b (strain CLIP80459).